Here is a 229-residue protein sequence, read N- to C-terminus: Potassium/proton antiporter CemA (229 aa).

4 consecutive transmembrane segments (helical) span residues 7–27, 114–134, 154–174, and 189–209; these read FTPLLYLVSIVFLPWWLSLSF, IICFVILSGFSILGNEELVIL, ILLLTDLCIGFHSPHGWELMV, and IISGLVSTFPVILDTIFKYWI.

It belongs to the CemA family.

The protein resides in the plastid. It localises to the chloroplast inner membrane. The enzyme catalyses K(+)(in) + H(+)(out) = K(+)(out) + H(+)(in). Its function is as follows. Contributes to K(+)/H(+) antiport activity by supporting proton efflux to control proton extrusion and homeostasis in chloroplasts in a light-dependent manner to modulate photosynthesis. Prevents excessive induction of non-photochemical quenching (NPQ) under continuous-light conditions. Indirectly promotes efficient inorganic carbon uptake into chloroplasts. This chain is Potassium/proton antiporter CemA, found in Coffea arabica (Arabian coffee).